The following is a 392-amino-acid chain: Flavohemoprotein (392 aa).

A Globin domain is found at 1–139 (MLNAEQRAII…LADILIGAEE (139 aa)). A heme b-binding site is contributed by His85. Residues Tyr95 and Glu138 each act as charge relay system in the active site. Residues 150–392 (GGWRGTREFR…EFFGPAAALE (243 aa)) are reductase. Residues 153-256 (RGTREFRLVR…FPPAGDFTLA (104 aa)) enclose the FAD-binding FR-type domain. FAD-binding positions include Tyr191 and 205–208 (RNYS). 268 to 273 (GVGITP) is an NADP(+) binding site. Residue 384-387 (FFGP) participates in FAD binding.

It belongs to the globin family. Two-domain flavohemoproteins subfamily. In the C-terminal section; belongs to the flavoprotein pyridine nucleotide cytochrome reductase family. Requires heme b as cofactor. FAD serves as cofactor.

It carries out the reaction 2 nitric oxide + NADPH + 2 O2 = 2 nitrate + NADP(+) + H(+). The catalysed reaction is 2 nitric oxide + NADH + 2 O2 = 2 nitrate + NAD(+) + H(+). Functionally, is involved in NO detoxification in an aerobic process, termed nitric oxide dioxygenase (NOD) reaction that utilizes O(2) and NAD(P)H to convert NO to nitrate, which protects the bacterium from various noxious nitrogen compounds. Therefore, plays a central role in the inducible response to nitrosative stress. This is Flavohemoprotein from Pseudomonas putida (strain ATCC 47054 / DSM 6125 / CFBP 8728 / NCIMB 11950 / KT2440).